The chain runs to 431 residues: MIERVKGTRDFLPEEMVKRRWVFEKIREVFETYGFKEVLTPVMEYTKLFQLRSGEEVVKQLYAFKDKGGRDVALRPDMTSSVARLYVNSFQTAPKPIKWYYIANMFRYEEPQSGRYREFWQAGVELIGSDKIEADAEVIALFVDSYLSTGLKDFTVNIGDRVLLDEFAKMLGVKDDIGLMRIIDKKDKLSQEEFLKALGEFGLDENGIEKVLNLIEIKGKPDDVLPLAEELFTSERAKEEISRLYNLVDILSWYEVDEWIQIDLGIARGFDYYTSIVFEAIVPNDLGIGSIGGGGRYDNLIEVFGGKPTPATGFAIGIERLIPILEWKGLLPELKAGPDVFVIPVGDSRDVATAIVTRLRKAGIRSDIELSGRKLRKALDYANRIGVRLSIIVGKRDLERGVVTIRDLESGNQVEVPVDNVVTKVRELLNQ.

The protein belongs to the class-II aminoacyl-tRNA synthetase family.

Its subcellular location is the cytoplasm. It carries out the reaction tRNA(His) + L-histidine + ATP = L-histidyl-tRNA(His) + AMP + diphosphate + H(+). The sequence is that of Histidine--tRNA ligase (hisS) from Pyrococcus abyssi (strain GE5 / Orsay).